A 600-amino-acid polypeptide reads, in one-letter code: Elongation factor 4 (600 aa).

Residues 5–187 (KYIRNFSIIA…AIVNKLPPPK (183 aa)) form the tr-type G domain. GTP-binding positions include 17 to 22 (DHGKST) and 134 to 137 (NKID).

This sequence belongs to the TRAFAC class translation factor GTPase superfamily. Classic translation factor GTPase family. LepA subfamily.

The protein localises to the cell inner membrane. It carries out the reaction GTP + H2O = GDP + phosphate + H(+). Required for accurate and efficient protein synthesis under certain stress conditions. May act as a fidelity factor of the translation reaction, by catalyzing a one-codon backward translocation of tRNAs on improperly translocated ribosomes. Back-translocation proceeds from a post-translocation (POST) complex to a pre-translocation (PRE) complex, thus giving elongation factor G a second chance to translocate the tRNAs correctly. Binds to ribosomes in a GTP-dependent manner. This Rickettsia felis (strain ATCC VR-1525 / URRWXCal2) (Rickettsia azadi) protein is Elongation factor 4.